Consider the following 424-residue polypeptide: UPF0229 protein Ping_2705 (424 aa).

A disordered region spans residues 77-108; that stretch reads PGNQDFIGGDRIERPPSGGAGGSGSGASDSGK.

The protein belongs to the UPF0229 family.

The polypeptide is UPF0229 protein Ping_2705 (Psychromonas ingrahamii (strain DSM 17664 / CCUG 51855 / 37)).